The chain runs to 291 residues: Exosome complex component rrp45 (291 aa).

Belongs to the RNase PH family. Component of the RNA exosome complex. Specifically part of the catalytically inactive RNA exosome core complex (Exo-9) which may associate with the catalytic subunits rrp6 and dis3 in cytoplasmic- and nuclear-specific RNA exosome complex forms. Exo-9 is formed by a hexameric base ring of RNase PH domain-containing subunits and a cap ring consisting of csl4, rrp4 and rrp40.

It localises to the cytoplasm. The protein localises to the nucleus. Its subcellular location is the nucleolus. Its function is as follows. Non-catalytic component of the RNA exosome complex which has 3'-&gt;5' exoribonuclease activity and participates in a multitude of cellular RNA processing and degradation events. In the nucleus, the RNA exosome complex is involved in proper maturation of stable RNA species such as rRNA, snRNA and snoRNA, in the elimination of RNA processing by-products and non-coding 'pervasive' transcripts, such as antisense RNA species and cryptic unstable transcripts (CUTs), and of mRNAs with processing defects, thereby limiting or excluding their export to the cytoplasm. In the cytoplasm, the RNA exosome complex is involved in general mRNA turnover and in RNA surveillance pathways, preventing translation of aberrant mRNAs. The catalytic inactive RNA exosome core complex of 9 subunits (Exo-9) is proposed to play a pivotal role in the binding and presentation of RNA for ribonucleolysis, and to serve as a scaffold for the association with catalytic subunits and accessory proteins or complexes. ski6 is part of the hexameric ring of RNase PH domain-containing subunits proposed to form a central channel which threads RNA substrates for degradation. The sequence is that of Exosome complex component rrp45 (rrp45) from Schizosaccharomyces pombe (strain 972 / ATCC 24843) (Fission yeast).